The sequence spans 250 residues: MSKENKTTDFGFTEVPWEEKQKKVAGVFHSVAAKYDLMNDLMSFGIHRIWKKQTIAKTGVRKGDKVLDLAGGTGDLAYKFCQMVGSQGKVVLSDINSSMLEVGKEKLTNKGCVGNIEYVQANAECLPFPDNYFDCITISFGLRNVTDKAKALASMCRVLKPGGRLLVLEFSKPIVPMLSKVYDEYSFKALPFLGKIITQDAESYKYLAESIRKHPDQETLKQMMYDAGFDNVEYQNMTGGIVALHIGYKY.

S-adenosyl-L-methionine-binding positions include Thr-73, Asp-94, 122 to 123, and Ser-139; that span reads NA.

The protein belongs to the class I-like SAM-binding methyltransferase superfamily. MenG/UbiE family.

The catalysed reaction is a 2-demethylmenaquinol + S-adenosyl-L-methionine = a menaquinol + S-adenosyl-L-homocysteine + H(+). It catalyses the reaction a 2-methoxy-6-(all-trans-polyprenyl)benzene-1,4-diol + S-adenosyl-L-methionine = a 5-methoxy-2-methyl-3-(all-trans-polyprenyl)benzene-1,4-diol + S-adenosyl-L-homocysteine + H(+). The protein operates within quinol/quinone metabolism; menaquinone biosynthesis; menaquinol from 1,4-dihydroxy-2-naphthoate: step 2/2. Its pathway is cofactor biosynthesis; ubiquinone biosynthesis. In terms of biological role, methyltransferase required for the conversion of demethylmenaquinol (DMKH2) to menaquinol (MKH2) and the conversion of 2-polyprenyl-6-methoxy-1,4-benzoquinol (DDMQH2) to 2-polyprenyl-3-methyl-6-methoxy-1,4-benzoquinol (DMQH2). In Francisella philomiragia subsp. philomiragia (strain ATCC 25017 / CCUG 19701 / FSC 153 / O#319-036), this protein is Ubiquinone/menaquinone biosynthesis C-methyltransferase UbiE.